We begin with the raw amino-acid sequence, 86 residues long: F(1)-ATPase inhibitor STF1, mitochondrial (86 aa).

Residues 1 to 23 (MLNRCISRNTRLPVNLRIASRFY) constitute a mitochondrion transit peptide. Residue serine 24 is modified to Phosphoserine.

The protein belongs to the ATPase inhibitor family. As to quaternary structure, monomer and homodimer. Monomeric at pH 5.0 and dimeric at either pH 6.5 or 8.0. The protein aggregates increasingly strongly with increasing pH.

Its subcellular location is the mitochondrion. In terms of biological role, endogenous low-affinity ATPase inhibitor, which inhibits specifically the reverse ATPase reaction of mitochondrial F(1)F(0)-type ATP synthase. Found to stabilize, together with STF2, a complex of intrinsic ATPase inhibitor INH1 and proton-translocating ATPase in mitochondrial membranes. Binds directly to purified F1-ATPase. The sequence is that of F(1)-ATPase inhibitor STF1, mitochondrial (STF1) from Saccharomyces cerevisiae (strain ATCC 204508 / S288c) (Baker's yeast).